The sequence spans 505 residues: Lysine--tRNA ligase (505 aa).

Mg(2+) is bound by residues glutamate 415 and glutamate 422.

The protein belongs to the class-II aminoacyl-tRNA synthetase family. Homodimer. It depends on Mg(2+) as a cofactor.

The protein resides in the cytoplasm. It carries out the reaction tRNA(Lys) + L-lysine + ATP = L-lysyl-tRNA(Lys) + AMP + diphosphate. In Yersinia enterocolitica serotype O:8 / biotype 1B (strain NCTC 13174 / 8081), this protein is Lysine--tRNA ligase.